The primary structure comprises 532 residues: uncharacterized protein (532 aa).

Helical transmembrane passes span 25–45 (ITKILSAVYRVPFQNIVGDVG), 65–85 (SGFPVIISKLMNDYSEKNHHT), 109–129 (AVPIALFMGDSHLAVLIQVAA), 134–154 (LFPFVALLRGGFQGRHEMLPS), 179–199 (KGASLYTAGAAAASGSLAGSL), 203–223 (IILGFFWFKTKRDNQTDRQNE), 248–268 (LLLFIQLVDALNLYALLSGGE), 302–322 (VPYISMAVKNKELKIMKEKIT), 344–364 (KPVNIMLFQNGEGTGALQVFS), 371–391 (SLAVTAAAVLQGAGYTVFPAI), 392–412 (AVGAGVAVKWVLNTLLVPRYG), 425–445 (AAVAGLNLYQLRQKEWLDKLR), 459–479 (SAVLLAYTRLWTFLFPATGRG), and 494–514 (AVFIYCMMRLGIFTDEELNSV).

The protein belongs to the polysaccharide synthase family.

The protein resides in the cell membrane. This is an uncharacterized protein from Bacillus subtilis (strain 168).